The primary structure comprises 89 residues: Small ribosomal subunit protein uS15 (89 aa).

This sequence belongs to the universal ribosomal protein uS15 family. As to quaternary structure, part of the 30S ribosomal subunit. Forms a bridge to the 50S subunit in the 70S ribosome, contacting the 23S rRNA.

One of the primary rRNA binding proteins, it binds directly to 16S rRNA where it helps nucleate assembly of the platform of the 30S subunit by binding and bridging several RNA helices of the 16S rRNA. In terms of biological role, forms an intersubunit bridge (bridge B4) with the 23S rRNA of the 50S subunit in the ribosome. The sequence is that of Small ribosomal subunit protein uS15 from Limosilactobacillus fermentum (strain NBRC 3956 / LMG 18251) (Lactobacillus fermentum).